Reading from the N-terminus, the 154-residue chain is 6,7-dimethyl-8-ribityllumazine synthase (154 aa).

5-amino-6-(D-ribitylamino)uracil contacts are provided by residues Phe26, Ala60–Glu62, and Cys84–Ile86. Glu89–Thr90 is a (2S)-2-hydroxy-3-oxobutyl phosphate binding site. The active-site Proton donor is the His92. 5-amino-6-(D-ribitylamino)uracil is bound at residue Asn117. Arg131 is a binding site for (2S)-2-hydroxy-3-oxobutyl phosphate.

This sequence belongs to the DMRL synthase family.

The enzyme catalyses (2S)-2-hydroxy-3-oxobutyl phosphate + 5-amino-6-(D-ribitylamino)uracil = 6,7-dimethyl-8-(1-D-ribityl)lumazine + phosphate + 2 H2O + H(+). Its pathway is cofactor biosynthesis; riboflavin biosynthesis; riboflavin from 2-hydroxy-3-oxobutyl phosphate and 5-amino-6-(D-ribitylamino)uracil: step 1/2. In terms of biological role, catalyzes the formation of 6,7-dimethyl-8-ribityllumazine by condensation of 5-amino-6-(D-ribitylamino)uracil with 3,4-dihydroxy-2-butanone 4-phosphate. This is the penultimate step in the biosynthesis of riboflavin. This Leptothrix cholodnii (strain ATCC 51168 / LMG 8142 / SP-6) (Leptothrix discophora (strain SP-6)) protein is 6,7-dimethyl-8-ribityllumazine synthase.